We begin with the raw amino-acid sequence, 244 residues long: MGRGRVELKRIENKINRQVTFAKRRNGLLKKAYELSVLCDAEVALIIFSTRGKLYEFCSSSSMLKTLERYQKCSYGAVEVSRPSKELEQSSYREYLKLKSKFESLQRTQRNLLGEDLGPLNTKELEQLERQLETSLKQVRSTKTQFMLDQLSDLQNKEQVLVESNKALTRKLDEISVKNHLQLSWESGEQSMPYGHQQAQSQGFFQPLECNPTLQIGYNPAGSSQLSAPSNAQNVNGFIPGWML.

The MADS-box domain maps to 1 to 61; that stretch reads MGRGRVELKR…GKLYEFCSSS (61 aa). Positions 88 to 178 constitute a K-box domain; sequence EQSSYREYLK…TRKLDEISVK (91 aa).

As to expression, expressed in flowers and seeds.

The protein localises to the nucleus. Functionally, probable transcription factor involved in flower development. This is Agamous-like MADS-box protein MADS2 from Vitis vinifera (Grape).